A 110-amino-acid polypeptide reads, in one-letter code: uncharacterized protein (110 aa).

This sequence belongs to the RuBisCO large chain family.

It localises to the mitochondrion. This is an uncharacterized protein from Arabidopsis thaliana (Mouse-ear cress).